Here is a 109-residue protein sequence, read N- to C-terminus: Ribonuclease P protein component (109 aa).

Belongs to the RnpA family. In terms of assembly, consists of a catalytic RNA component (M1 or rnpB) and a protein subunit.

The enzyme catalyses Endonucleolytic cleavage of RNA, removing 5'-extranucleotides from tRNA precursor.. Its function is as follows. RNaseP catalyzes the removal of the 5'-leader sequence from pre-tRNA to produce the mature 5'-terminus. It can also cleave other RNA substrates such as 4.5S RNA. The protein component plays an auxiliary but essential role in vivo by binding to the 5'-leader sequence and broadening the substrate specificity of the ribozyme. The protein is Ribonuclease P protein component of Nitratiruptor sp. (strain SB155-2).